A 149-amino-acid chain; its full sequence is Large ribosomal subunit protein uL13 (149 aa).

This sequence belongs to the universal ribosomal protein uL13 family. In terms of assembly, part of the 50S ribosomal subunit.

Its function is as follows. This protein is one of the early assembly proteins of the 50S ribosomal subunit, although it is not seen to bind rRNA by itself. It is important during the early stages of 50S assembly. This is Large ribosomal subunit protein uL13 from Borrelia hermsii (strain HS1 / DAH).